Here is an 83-residue protein sequence, read N- to C-terminus: Disintegrin isoform D-2 (83 aa).

The region spanning 2 to 83 (PPVCGNELLE…GKSSDCPWNH (82 aa)) is the Disintegrin domain. Cystine bridges form between cysteine 5/cysteine 24, cysteine 16/cysteine 34, cysteine 18/cysteine 29, cysteine 28/cysteine 51, cysteine 42/cysteine 48, cysteine 47/cysteine 72, and cysteine 60/cysteine 79. Residues 64–66 (RGD) carry the Cell attachment site motif.

This sequence belongs to the venom metalloproteinase (M12B) family. P-II subfamily. P-IIa sub-subfamily. In terms of assembly, monomer (disintegrin). As to expression, expressed by the venom gland.

The protein localises to the secreted. Inhibits fibrinogen interaction with platelets. Acts by binding to the alpha-IIb/beta-3 (ITGA2B/ITGB3) on the platelet surface and inhibits aggregation induced by ADP, thrombin, platelet-activating factor and collagen. This Bitis arietans (African puff adder) protein is Disintegrin isoform D-2.